Consider the following 351-residue polypeptide: Nicotinate-nucleotide--dimethylbenzimidazole phosphoribosyltransferase (351 aa).

Glutamate 317 functions as the Proton acceptor in the catalytic mechanism.

The protein belongs to the CobT family.

It catalyses the reaction 5,6-dimethylbenzimidazole + nicotinate beta-D-ribonucleotide = alpha-ribazole 5'-phosphate + nicotinate + H(+). Its pathway is nucleoside biosynthesis; alpha-ribazole biosynthesis; alpha-ribazole from 5,6-dimethylbenzimidazole: step 1/2. Its function is as follows. Catalyzes the synthesis of alpha-ribazole-5'-phosphate from nicotinate mononucleotide (NAMN) and 5,6-dimethylbenzimidazole (DMB). In Pseudomonas aeruginosa (strain ATCC 15692 / DSM 22644 / CIP 104116 / JCM 14847 / LMG 12228 / 1C / PRS 101 / PAO1), this protein is Nicotinate-nucleotide--dimethylbenzimidazole phosphoribosyltransferase.